A 54-amino-acid polypeptide reads, in one-letter code: Ovomucoid (54 aa).

A Kazal-like domain is found at 4–54 (VNCSDYPKPVCSLLYMPLCGSDNKTYGNKCNFCNAVADSNGTLTLSHFGKC). Intrachain disulfides connect Cys-6–Cys-36, Cys-14–Cys-33, and Cys-22–Cys-54. Asn-43 carries N-linked (GlcNAc...) asparagine glycosylation.

The protein localises to the secreted. This Geococcyx californianus (Greater roadrunner) protein is Ovomucoid.